We begin with the raw amino-acid sequence, 260 residues long: ATP synthase subunit a (260 aa).

The next 7 membrane-spanning stretches (helical) occupy residues 30–50 (IAFTNSALWMAITTAVLIVFV), 96–116 (LFAFILFANMLGLLPLALVGV), 125–145 (FTVTGVLAIMSFAIVLGVGFA), 151–171 (FFSLFVPHGTPVPMIPIIFPI), 187–207 (LFVAMMAGHVLLEVLSGFVIS), 213–233 (VGTFFLAAVPSFLLMIGICAL), and 234–254 (ELLVAGIQAYVFALLTCVYLN).

Belongs to the ATPase A chain family. F-type ATPases have 2 components, CF(1) - the catalytic core - and CF(0) - the membrane proton channel. CF(1) has five subunits: alpha(3), beta(3), gamma(1), delta(1), epsilon(1). CF(0) has three main subunits: a(1), b(2) and c(9-12). The alpha and beta chains form an alternating ring which encloses part of the gamma chain. CF(1) is attached to CF(0) by a central stalk formed by the gamma and epsilon chains, while a peripheral stalk is formed by the delta and b chains.

Its subcellular location is the cell inner membrane. In terms of biological role, key component of the proton channel; it plays a direct role in the translocation of protons across the membrane. The chain is ATP synthase subunit a from Novosphingobium aromaticivorans (strain ATCC 700278 / DSM 12444 / CCUG 56034 / CIP 105152 / NBRC 16084 / F199).